Consider the following 259-residue polypeptide: Flagellar brake protein YcgR (259 aa).

A PilZ domain is found at 129–246 (QRREFYRLQT…DNAIQRYIFK (118 aa)).

Belongs to the YcgR family. Monomer. Interacts with the flagellar basal bodies.

Its subcellular location is the bacterial flagellum basal body. In terms of biological role, acts as a flagellar brake, regulating swimming and swarming in a bis-(3'-5') cyclic diguanylic acid (c-di-GMP)-dependent manner. Binds 1 c-di-GMP dimer per subunit. Increasing levels of c-di-GMP lead to decreased motility. The chain is Flagellar brake protein YcgR from Azoarcus sp. (strain BH72).